Here is a 142-residue protein sequence, read N- to C-terminus: Organic hydroperoxide resistance protein-like 2 (142 aa).

This sequence belongs to the OsmC/Ohr family.

The polypeptide is Organic hydroperoxide resistance protein-like 2 (Staphylococcus saprophyticus subsp. saprophyticus (strain ATCC 15305 / DSM 20229 / NCIMB 8711 / NCTC 7292 / S-41)).